A 269-amino-acid polypeptide reads, in one-letter code: Formamidopyrimidine-DNA glycosylase (269 aa).

The active-site Schiff-base intermediate with DNA is P2. The active-site Proton donor is the E3. Catalysis depends on K57, which acts as the Proton donor; for beta-elimination activity. Residues H90, R109, and K150 each contribute to the DNA site. The FPG-type zinc-finger motif lies at 235 to 269; sequence QVYGRKGEPCRVCGTPIVATKHAQRATFYCRHCQK. The active-site Proton donor; for delta-elimination activity is the R259.

This sequence belongs to the FPG family. In terms of assembly, monomer. Zn(2+) is required as a cofactor.

It catalyses the reaction Hydrolysis of DNA containing ring-opened 7-methylguanine residues, releasing 2,6-diamino-4-hydroxy-5-(N-methyl)formamidopyrimidine.. It carries out the reaction 2'-deoxyribonucleotide-(2'-deoxyribose 5'-phosphate)-2'-deoxyribonucleotide-DNA = a 3'-end 2'-deoxyribonucleotide-(2,3-dehydro-2,3-deoxyribose 5'-phosphate)-DNA + a 5'-end 5'-phospho-2'-deoxyribonucleoside-DNA + H(+). Its function is as follows. Involved in base excision repair of DNA damaged by oxidation or by mutagenic agents. Acts as a DNA glycosylase that recognizes and removes damaged bases. Has a preference for oxidized purines, such as 7,8-dihydro-8-oxoguanine (8-oxoG). Has AP (apurinic/apyrimidinic) lyase activity and introduces nicks in the DNA strand. Cleaves the DNA backbone by beta-delta elimination to generate a single-strand break at the site of the removed base with both 3'- and 5'-phosphates. The sequence is that of Formamidopyrimidine-DNA glycosylase from Salmonella dublin (strain CT_02021853).